The primary structure comprises 472 residues: Adenosylhomocysteinase (472 aa).

Substrate is bound by residues T60, D136, and E197. 198–200 is a binding site for NAD(+); that stretch reads TTT. Substrate-binding residues include K227 and D231. NAD(+) is bound by residues N232, 261-266, E284, N319, 340-342, and N388; these read GYGDVG and IGH.

It belongs to the adenosylhomocysteinase family. Requires NAD(+) as cofactor.

The protein localises to the cytoplasm. The enzyme catalyses S-adenosyl-L-homocysteine + H2O = L-homocysteine + adenosine. The protein operates within amino-acid biosynthesis; L-homocysteine biosynthesis; L-homocysteine from S-adenosyl-L-homocysteine: step 1/1. Its function is as follows. May play a key role in the regulation of the intracellular concentration of adenosylhomocysteine. The protein is Adenosylhomocysteinase of Maridesulfovibrio salexigens (strain ATCC 14822 / DSM 2638 / NCIMB 8403 / VKM B-1763) (Desulfovibrio salexigens).